The chain runs to 578 residues: MPRGLELLIAQTILQGFDAQYGRFLEVTSGAQQRFEQADWHAVQQAMKNRIHLYDHHVGLVVEQLRCITNGQSTDAEFLLRVKEHYTRLLPDYPRFEIAESFFNSVYCRLFDHRSLTPERLFIFSSQPERRFRTIPRPLAKDFHPDHGWESLLMRVISDLPLRLHWQNKSRDIHYIIRHLTETLGPENLSKSHLQVANELFYRNKAAWLVGKLITPSGTLPFLLPIHQTDDGELFIDTCLTTTAEASIVFGFARSYFMVYAPLPAALVEWLREILPGKTTAELYMAIGCQKHAKTESYREYLVYLQGCNEQFIEAPGIRGMVMLVFTLPGFDRVFKVIKDKFAPQKEMSAAHVRACYQLVKEHDRVGRMADTQEFENFVLEKRHISPALMELLLQEAAEKITDLGEQIVIRHLYIERRMVPLNIWLEQVEGQQLRDAIEEYGNAIRQLAAANIFPGDMLFKNFGVTRHGRVVFYDYDEICYMTEVNFRDIPPPRYPEDELASEPWYSVSPGDVFPEEFRHWLCADPRIGPLFEEMHADLFRADYWRALQNRIREGHVEDVYAYRRRQRFSVRYGEMLF.

ATP contacts are provided by residues Ala-315 to Met-321 and Lys-336. Asp-371 is a catalytic residue.

Belongs to the AceK family.

Its subcellular location is the cytoplasm. The enzyme catalyses L-seryl-[isocitrate dehydrogenase] + ATP = O-phospho-L-seryl-[isocitrate dehydrogenase] + ADP + H(+). In terms of biological role, bifunctional enzyme which can phosphorylate or dephosphorylate isocitrate dehydrogenase (IDH) on a specific serine residue. This is a regulatory mechanism which enables bacteria to bypass the Krebs cycle via the glyoxylate shunt in response to the source of carbon. When bacteria are grown on glucose, IDH is fully active and unphosphorylated, but when grown on acetate or ethanol, the activity of IDH declines drastically concomitant with its phosphorylation. In Escherichia coli O157:H7, this protein is Isocitrate dehydrogenase kinase/phosphatase.